The following is a 78-amino-acid chain: uncharacterized protein (78 aa).

Residues glutamate 58 to proline 78 are disordered.

This is an uncharacterized protein from Vaccinia virus (strain Copenhagen) (VACV).